The primary structure comprises 115 residues: Large ribosomal subunit protein bL19 (115 aa).

This sequence belongs to the bacterial ribosomal protein bL19 family.

This protein is located at the 30S-50S ribosomal subunit interface and may play a role in the structure and function of the aminoacyl-tRNA binding site. The sequence is that of Large ribosomal subunit protein bL19 from Buchnera aphidicola subsp. Cinara cedri (strain Cc).